Consider the following 562-residue polypeptide: Beta-hexosaminidase (562 aa).

An N-terminal signal peptide occupies residues 1–22 (MVLDKMIIFHLLLWLCNVVVHA). Residues N38, N52, N111, N337, N382, N396, and N463 are each glycosylated (N-linked (GlcNAc...) asparagine).

Belongs to the glycosyl hydrolase 20 family.

The enzyme catalyses Hydrolysis of terminal non-reducing N-acetyl-D-hexosamine residues in N-acetyl-beta-D-hexosaminides.. Functionally, has a broad substrate specificity. The sequence is that of Beta-hexosaminidase (HEX1) from Candida albicans (Yeast).